The sequence spans 38 residues: Large ribosomal subunit protein bL36 (38 aa).

It belongs to the bacterial ribosomal protein bL36 family.

This chain is Large ribosomal subunit protein bL36, found in Chloroflexus aurantiacus (strain ATCC 29366 / DSM 635 / J-10-fl).